A 319-amino-acid polypeptide reads, in one-letter code: Ribonuclease Z (319 aa).

Residues histidine 62, histidine 64, aspartate 66, histidine 67, histidine 145, aspartate 215, and histidine 273 each coordinate Zn(2+). Aspartate 66 serves as the catalytic Proton acceptor.

Belongs to the RNase Z family. In terms of assembly, homodimer. Requires Zn(2+) as cofactor.

The enzyme catalyses Endonucleolytic cleavage of RNA, removing extra 3' nucleotides from tRNA precursor, generating 3' termini of tRNAs. A 3'-hydroxy group is left at the tRNA terminus and a 5'-phosphoryl group is left at the trailer molecule.. Zinc phosphodiesterase, which displays some tRNA 3'-processing endonuclease activity. Probably involved in tRNA maturation, by removing a 3'-trailer from precursor tRNA. The protein is Ribonuclease Z of Borrelia recurrentis (strain A1).